A 944-amino-acid polypeptide reads, in one-letter code: snRNA-activating protein complex subunit 4 homolog (944 aa).

The disordered stretch occupies residues 1 to 22; sequence MSDLVMFEPGASTSTDVPTNTD. Polar residues predominate over residues 11-22; that stretch reads ASTSTDVPTNTD. The Myb-like 1 domain maps to 177-244; sequence TSNFDRRQWT…AVKSKWYNEL (68 aa). The HTH myb-type 1 domain occupies 245 to 301; sequence NPKWNKEHWSNEEVEKLKYLRESPKFVSWPMLALNLGTNRTSYQCMEKYKTEVSQHS. A DNA-binding region (H-T-H motif) is located at residues 273–297; sequence WPMLALNLGTNRTSYQCMEKYKTEV. The Myb-like 2 domain maps to 304–350; the sequence is WSQDEDTKLIALTKITSINGHIQWDKVAQCMPGRTRQQVRTRFSHTL. HTH myb-type domains follow at residues 351 to 406 and 407 to 459; these read DASV…NRSA and HVNE…AAKL. 2 consecutive DNA-binding regions (H-T-H motif) follow at residues 379-402 and 432-455; these read WAKVAQAVQNRNDSQCRERWTNVL and WAKCQMLLPKKTSRQLRRRYLQLI. Residues 911–921 are compositionally biased toward low complexity; that stretch reads ARPARPPRSSA. The disordered stretch occupies residues 911–935; sequence ARPARPPRSSAGTPTPSHVSIDTES. Residues 922 to 935 show a composition bias toward polar residues; sequence GTPTPSHVSIDTES.

In terms of tissue distribution, broadly expressed in all tissues, including head, vulva and tail.

The protein resides in the nucleus. Its function is as follows. Binds to the promoter regions of RNA polymerase II and III small-nuclear RNA genes, type 3 RNA polymerase III non-coding RNA genes, small nucleolar RNAs and transfer RNA genes. Required for expression of mature 21U-RNAs. The protein is snRNA-activating protein complex subunit 4 homolog of Caenorhabditis elegans.